A 484-amino-acid chain; its full sequence is tRNA sulfurtransferase (484 aa).

Positions 63 to 167 (QAFGERLACI…GDKLYMVTKR (105 aa)) constitute a THUMP domain. ATP contacts are provided by residues 185-186 (LI), Lys-267, Gly-289, and Gln-298. Cys-346 and Cys-458 are oxidised to a cystine. The Rhodanese domain maps to 406–484 (IDTNEVVIDI…GYHNVKVYRP (79 aa)). Cys-458 acts as the Cysteine persulfide intermediate in catalysis.

The protein belongs to the ThiI family.

Its subcellular location is the cytoplasm. It catalyses the reaction [ThiI sulfur-carrier protein]-S-sulfanyl-L-cysteine + a uridine in tRNA + 2 reduced [2Fe-2S]-[ferredoxin] + ATP + H(+) = [ThiI sulfur-carrier protein]-L-cysteine + a 4-thiouridine in tRNA + 2 oxidized [2Fe-2S]-[ferredoxin] + AMP + diphosphate. The enzyme catalyses [ThiS sulfur-carrier protein]-C-terminal Gly-Gly-AMP + S-sulfanyl-L-cysteinyl-[cysteine desulfurase] + AH2 = [ThiS sulfur-carrier protein]-C-terminal-Gly-aminoethanethioate + L-cysteinyl-[cysteine desulfurase] + A + AMP + 2 H(+). It functions in the pathway cofactor biosynthesis; thiamine diphosphate biosynthesis. In terms of biological role, catalyzes the ATP-dependent transfer of a sulfur to tRNA to produce 4-thiouridine in position 8 of tRNAs, which functions as a near-UV photosensor. Also catalyzes the transfer of sulfur to the sulfur carrier protein ThiS, forming ThiS-thiocarboxylate. This is a step in the synthesis of thiazole, in the thiamine biosynthesis pathway. The sulfur is donated as persulfide by IscS. The polypeptide is tRNA sulfurtransferase (Shewanella sp. (strain ANA-3)).